Consider the following 348-residue polypeptide: [LysW]-L-2-aminoadipate 6-phosphate reductase (348 aa).

14-17 (SGYA) provides a ligand contact to NADP(+). The active site involves Cys-151. NADP(+) is bound at residue Asn-315.

The protein belongs to the NAGSA dehydrogenase family. Type 1 subfamily. LysY sub-subfamily.

It is found in the cytoplasm. It catalyses the reaction [amino-group carrier protein]-C-terminal-N-(1-carboxy-5-oxopentan-1-yl)-L-glutamine + phosphate + NADP(+) = [amino-group carrier protein]-C-terminal-N-(1-carboxy-5-phosphooxy-5-oxopentan-1-yl)-L-glutamine + NADPH + H(+). It participates in amino-acid biosynthesis; L-lysine biosynthesis via AAA pathway; L-lysine from L-alpha-aminoadipate (Thermus route): step 3/5. Catalyzes the NADPH-dependent reduction of [LysW]-aminoadipate 6-phosphate to yield [LysW]-aminoadipate 6-semialdehyde. The protein is [LysW]-L-2-aminoadipate 6-phosphate reductase of Deinococcus radiodurans (strain ATCC 13939 / DSM 20539 / JCM 16871 / CCUG 27074 / LMG 4051 / NBRC 15346 / NCIMB 9279 / VKM B-1422 / R1).